Consider the following 381-residue polypeptide: Neutral protease 2 homolog mep20 (381 aa).

The first 19 residues, 1–19 (MRFTALASAILPLACNVLA), serve as a signal peptide directing secretion. Residues 20-193 (LPAKTGEAPK…ASAVKPLDKR (174 aa)) constitute a propeptide that is removed on maturation. Intrachain disulfides connect Cys199/Cys271 and Cys278/Cys296. His321 provides a ligand contact to Zn(2+). The active site involves Glu322. Zn(2+) is bound by residues His325 and Asp336.

The protein belongs to the peptidase M35 family. Zn(2+) is required as a cofactor.

It carries out the reaction Preferential cleavage of bonds with hydrophobic residues in P1'. Also 3-Asn-|-Gln-4 and 8-Gly-|-Ser-9 bonds in insulin B chain.. Its function is as follows. Secreted metalloproteinase that allows assimilation of proteinaceous substrates. Shows high activities on basic nuclear substrates such as histone and protamine. The protein is Neutral protease 2 homolog mep20 (mep20) of Aspergillus flavus.